The sequence spans 1100 residues: SLIT-ROBO Rho GTPase-activating protein 2 (1100 aa).

The F-BAR domain occupies 19–324 (TQVKEIRAQL…AAENLEANSD (306 aa)). 2 coiled-coil regions span residues 170–201 (YNMD…HEEK) and 363–400 (GELI…IQDM). Over residues 181 to 203 (LKEAEKQEEKQMSRSVRHEEKQT) the composition is skewed to basic and acidic residues. The disordered stretch occupies residues 181 to 210 (LKEAEKQEEKQMSRSVRHEEKQTPRSPDSL). Residues 496-680 (VRKQEAIQII…TIIIHHESIF (185 aa)) enclose the Rho-GAP domain. The region spanning 738–797 (SDPIEAIARFDYSGRTNRELSFKKGASLLLYSRASDDWWEGRHNGTEGLVPHQYIVVQDM) is the SH3 domain. Disordered stretches follow at residues 800–835 (GYAG…TGGH) and 852–938 (EATS…PLDP). Over residues 807–823 (PKADLEGSHDSVEEKVS) the composition is skewed to basic and acidic residues. The span at 919 to 932 (RKSTPTGRSKSFSN) shows a compositional bias: polar residues. The stretch at 945–972 (EHSSQDIEATMNTALSELRELERQSNVK) forms a coiled coil. A disordered region spans residues 986-1100 (KSGGTSEPSS…PPPTDKSCPV (115 aa)). Polar residues-rich tracts occupy residues 987–997 (SGGTSEPSSPL) and 1008–1049 (SQHP…GSTF). The span at 1067 to 1081 (SSSAGGSPAMGSPTT) shows a compositional bias: low complexity. A compositionally biased stretch (pro residues) spans 1082–1094 (TIPPTPPPPPPPT).

The protein localises to the cell membrane. It is found in the cell projection. It localises to the dendritic spine. Its subcellular location is the postsynaptic density. The protein resides in the postsynaptic cell membrane. The protein localises to the lamellipodium. It is found in the cytoplasmic vesicle. It localises to the phagosome. Its subcellular location is the nucleus. The protein resides in the cytoplasm. The protein localises to the cytosol. Functionally, postsynaptic RAC1 GTPase activating protein (GAP) that plays a key role in neuronal morphogenesis and migration mainly during development of the cerebral cortex. Regulates excitatory and inhibitory synapse maturation and density in cortical pyramidal neurons. Mechanistically, acts by binding and deforming membranes, thereby regulating actin dynamics to regulate cell migration and differentiation. This chain is SLIT-ROBO Rho GTPase-activating protein 2 (srgap2), found in Danio rerio (Zebrafish).